We begin with the raw amino-acid sequence, 734 residues long: Photosystem I P700 chlorophyll a apoprotein A2 (734 aa).

The next 8 membrane-spanning stretches (helical) occupy residues 46-69, 135-158, 175-199, 273-291, 330-353, 369-395, 417-439, and 517-535; these read IFAS…FHVA, LYNG…LHLQ, LNHH…HVAI, IAHH…GHMY, IHFQ…QHMY, AALY…IFFI, AIIS…LYVH, and FLVH…LILV. Residues Cys559 and Cys568 each contribute to the [4Fe-4S] cluster site. 2 helical membrane passes run 575 to 596 and 643 to 665; these read AFYL…YWHW and LSVW…MFLI. Chlorophyll a contacts are provided by His654, Met662, and Tyr670. Residue Trp671 participates in phylloquinone binding. A helical membrane pass occupies residues 707–727; it reads LVGLAHFSVGYIFTYAAFLIA.

It belongs to the PsaA/PsaB family. In terms of assembly, the PsaA/B heterodimer binds the P700 chlorophyll special pair and subsequent electron acceptors. PSI consists of a core antenna complex that captures photons, and an electron transfer chain that converts photonic excitation into a charge separation. The eukaryotic PSI reaction center is composed of at least 11 subunits. Requires P700 is a chlorophyll a/chlorophyll a' dimer, A0 is one or more chlorophyll a, A1 is one or both phylloquinones and FX is a shared 4Fe-4S iron-sulfur center. as cofactor.

The protein resides in the plastid. The protein localises to the chloroplast thylakoid membrane. The catalysed reaction is reduced [plastocyanin] + hnu + oxidized [2Fe-2S]-[ferredoxin] = oxidized [plastocyanin] + reduced [2Fe-2S]-[ferredoxin]. PsaA and PsaB bind P700, the primary electron donor of photosystem I (PSI), as well as the electron acceptors A0, A1 and FX. PSI is a plastocyanin-ferredoxin oxidoreductase, converting photonic excitation into a charge separation, which transfers an electron from the donor P700 chlorophyll pair to the spectroscopically characterized acceptors A0, A1, FX, FA and FB in turn. Oxidized P700 is reduced on the lumenal side of the thylakoid membrane by plastocyanin. The protein is Photosystem I P700 chlorophyll a apoprotein A2 of Morus indica (Mulberry).